The primary structure comprises 101 residues: Small ribosomal subunit protein uS14 (101 aa).

The protein belongs to the universal ribosomal protein uS14 family. As to quaternary structure, part of the 30S ribosomal subunit. Contacts proteins S3 and S10.

Its function is as follows. Binds 16S rRNA, required for the assembly of 30S particles and may also be responsible for determining the conformation of the 16S rRNA at the A site. The sequence is that of Small ribosomal subunit protein uS14 from Blochmanniella floridana.